The primary structure comprises 133 residues: FPRL1 inhibitory protein (133 aa).

Positions 1–28 are cleaved as a signal peptide; it reads MKKNITKTIIASTVIAAGLLTQTNDAKA.

It belongs to the CHIPS/FLIPr family.

It is found in the secreted. In terms of biological role, may be involved in countering the first line of host defense mechanisms. Impairs the leukocyte response to FPRL1 agonists by binding directly to host FPRL1. This is FPRL1 inhibitory protein (flr) from Staphylococcus aureus (strain Mu50 / ATCC 700699).